We begin with the raw amino-acid sequence, 730 residues long: Translation initiation factor IF-2 (730 aa).

The interval 48–151 (GNGNQKQGGS…NKAKPLPEKV (104 aa)) is disordered. Basic and acidic residues-rich tracts occupy residues 61–77 (EQQK…DHGQ) and 89–104 (NQHD…KGKA). A compositionally biased stretch (basic residues) spans 110-123 (KPKHKGNKNKKQHQ). Positions 137-148 (RQPEMNKAKPLP) are enriched in basic and acidic residues. The region spanning 231–400 (ERPPVVTIMG…LLVAEVEELK (170 aa)) is the tr-type G domain. The G1 stretch occupies residues 240 to 247 (GHVDHGKT). 240 to 247 (GHVDHGKT) lines the GTP pocket. The segment at 265–269 (GITQH) is G2. Residues 286–289 (DTPG) form a G3 region. GTP is bound by residues 286–290 (DTPGH) and 340–343 (NKMD). The segment at 340-343 (NKMD) is G4. The tract at residues 376–378 (SAL) is G5.

This sequence belongs to the TRAFAC class translation factor GTPase superfamily. Classic translation factor GTPase family. IF-2 subfamily.

The protein resides in the cytoplasm. Functionally, one of the essential components for the initiation of protein synthesis. Protects formylmethionyl-tRNA from spontaneous hydrolysis and promotes its binding to the 30S ribosomal subunits. Also involved in the hydrolysis of GTP during the formation of the 70S ribosomal complex. The sequence is that of Translation initiation factor IF-2 from Halalkalibacterium halodurans (strain ATCC BAA-125 / DSM 18197 / FERM 7344 / JCM 9153 / C-125) (Bacillus halodurans).